The following is a 465-amino-acid chain: Beta-1,2-xylosyltransferase XYXT1 (465 aa).

Over 1-11 (MKAAVRSKKSK) the chain is Cytoplasmic. A helical; Signal-anchor for type II membrane protein transmembrane segment spans residues 12-32 (GSFCHPPLLLLIVAIQFLVIY). Topologically, residues 33-465 (SPTLDQYMVM…VLLKALHLLR (433 aa)) are lumenal. N-linked (GlcNAc...) asparagine glycans are attached at residues N80, N118, N125, N266, and N403.

The protein belongs to the glycosyltransferase 61 family. As to expression, widely expressed.

It localises to the golgi apparatus membrane. The protein operates within glycan metabolism. Functionally, glycosyltransferase involved in the xylosylation of xylan, the major hemicellulose (non-cellulosic component) of primary and secondary walls of angiosperms. Possesses beta-1,2-xylosyltransferase activity, transferring xylose from UDP-xylose to the xylan backbone. Catalyzes the addition of 2-O-xylosyl side chains to the xylan backbone. The polypeptide is Beta-1,2-xylosyltransferase XYXT1 (Oryza sativa subsp. japonica (Rice)).